A 244-amino-acid polypeptide reads, in one-letter code: tRNA1(Val) (adenine(37)-N6)-methyltransferase (244 aa).

This sequence belongs to the methyltransferase superfamily. tRNA (adenine-N(6)-)-methyltransferase family.

The protein localises to the cytoplasm. It carries out the reaction adenosine(37) in tRNA1(Val) + S-adenosyl-L-methionine = N(6)-methyladenosine(37) in tRNA1(Val) + S-adenosyl-L-homocysteine + H(+). Its function is as follows. Specifically methylates the adenine in position 37 of tRNA(1)(Val) (anticodon cmo5UAC). The chain is tRNA1(Val) (adenine(37)-N6)-methyltransferase from Photorhabdus laumondii subsp. laumondii (strain DSM 15139 / CIP 105565 / TT01) (Photorhabdus luminescens subsp. laumondii).